Here is a 120-residue protein sequence, read N- to C-terminus: NAD(P)H-quinone oxidoreductase subunit 3 (120 aa).

3 helical membrane-spanning segments follow: residues 6 to 26 (GYDAFLGFLLISAAVPALALV), 64 to 84 (MFALVFVIFDVETVFLYPWAV), and 89 to 109 (LGLLAFIEALIFISILIVALA).

This sequence belongs to the complex I subunit 3 family. In terms of assembly, NDH-1 can be composed of about 15 different subunits; different subcomplexes with different compositions have been identified which probably have different functions.

Its subcellular location is the cellular thylakoid membrane. The catalysed reaction is a plastoquinone + NADH + (n+1) H(+)(in) = a plastoquinol + NAD(+) + n H(+)(out). It catalyses the reaction a plastoquinone + NADPH + (n+1) H(+)(in) = a plastoquinol + NADP(+) + n H(+)(out). NDH-1 shuttles electrons from an unknown electron donor, via FMN and iron-sulfur (Fe-S) centers, to quinones in the respiratory and/or the photosynthetic chain. The immediate electron acceptor for the enzyme in this species is believed to be plastoquinone. Couples the redox reaction to proton translocation, and thus conserves the redox energy in a proton gradient. Cyanobacterial NDH-1 also plays a role in inorganic carbon-concentration. The polypeptide is NAD(P)H-quinone oxidoreductase subunit 3 (Prochlorococcus marinus (strain SARG / CCMP1375 / SS120)).